The sequence spans 153 residues: Superoxide dismutase [Cu-Zn] (153 aa).

Residues H45, H47, and H62 each contribute to the Cu cation site. C56 and C145 form a disulfide bridge. Residues H62, H70, H79, and D82 each contribute to the Zn(2+) site. H119 lines the Cu cation pocket.

The protein belongs to the Cu-Zn superoxide dismutase family. In terms of assembly, homodimer. Cu cation is required as a cofactor. Zn(2+) serves as cofactor.

The protein resides in the cytoplasm. It catalyses the reaction 2 superoxide + 2 H(+) = H2O2 + O2. Its function is as follows. Destroys radicals which are normally produced within the cells and which are toxic to biological systems. The protein is Superoxide dismutase [Cu-Zn] (SOD) of Schistosoma mansoni (Blood fluke).